A 484-amino-acid chain; its full sequence is Glutamyl-tRNA(Gln) amidotransferase subunit A (484 aa).

Catalysis depends on charge relay system residues lysine 77 and serine 152. Serine 176 functions as the Acyl-ester intermediate in the catalytic mechanism.

The protein belongs to the amidase family. GatA subfamily. As to quaternary structure, heterotrimer of A, B and C subunits.

It catalyses the reaction L-glutamyl-tRNA(Gln) + L-glutamine + ATP + H2O = L-glutaminyl-tRNA(Gln) + L-glutamate + ADP + phosphate + H(+). In terms of biological role, allows the formation of correctly charged Gln-tRNA(Gln) through the transamidation of misacylated Glu-tRNA(Gln) in organisms which lack glutaminyl-tRNA synthetase. The reaction takes place in the presence of glutamine and ATP through an activated gamma-phospho-Glu-tRNA(Gln). The chain is Glutamyl-tRNA(Gln) amidotransferase subunit A from Pseudomonas aeruginosa (strain ATCC 15692 / DSM 22644 / CIP 104116 / JCM 14847 / LMG 12228 / 1C / PRS 101 / PAO1).